A 78-amino-acid chain; its full sequence is UPF0349 protein SAHV_0934 (78 aa).

The protein belongs to the UPF0349 family.

The sequence is that of UPF0349 protein SAHV_0934 from Staphylococcus aureus (strain Mu3 / ATCC 700698).